The following is a 218-amino-acid chain: Pyridoxine/pyridoxamine 5'-phosphate oxidase (218 aa).

Substrate is bound by residues 14-17 (RREY) and lysine 72. Residues 67–72 (RIVLLK), 82–83 (YT), arginine 88, lysine 89, and glutamine 111 each bind FMN. Substrate contacts are provided by tyrosine 129, arginine 133, and serine 137. FMN-binding positions include 146-147 (QS) and tryptophan 191. 197–199 (RLH) lines the substrate pocket. Arginine 201 is an FMN binding site.

The protein belongs to the pyridoxamine 5'-phosphate oxidase family. Homodimer. FMN serves as cofactor.

It carries out the reaction pyridoxamine 5'-phosphate + O2 + H2O = pyridoxal 5'-phosphate + H2O2 + NH4(+). It catalyses the reaction pyridoxine 5'-phosphate + O2 = pyridoxal 5'-phosphate + H2O2. It functions in the pathway cofactor metabolism; pyridoxal 5'-phosphate salvage; pyridoxal 5'-phosphate from pyridoxamine 5'-phosphate: step 1/1. It participates in cofactor metabolism; pyridoxal 5'-phosphate salvage; pyridoxal 5'-phosphate from pyridoxine 5'-phosphate: step 1/1. Its function is as follows. Catalyzes the oxidation of either pyridoxine 5'-phosphate (PNP) or pyridoxamine 5'-phosphate (PMP) into pyridoxal 5'-phosphate (PLP). This Escherichia fergusonii (strain ATCC 35469 / DSM 13698 / CCUG 18766 / IAM 14443 / JCM 21226 / LMG 7866 / NBRC 102419 / NCTC 12128 / CDC 0568-73) protein is Pyridoxine/pyridoxamine 5'-phosphate oxidase.